The primary structure comprises 182 residues: Protein LURP-one-related 7 (182 aa).

This sequence belongs to the LOR family.

Its function is as follows. Might be related to the phospholipid scramblase and tubby-like superfamily of membrane tethered transcription factors. This chain is Protein LURP-one-related 7, found in Arabidopsis thaliana (Mouse-ear cress).